The chain runs to 157 residues: MENTHSMISFKTLNKLKIQQLFSIKNKSFYSTSSPISSTVNSSGNDNIDIENDKEIKKKNRLIVKDLYKQLMYLGRVGFLGVDYIRDKAKPQFISNANLTDNNKINECIERTKYVIKEIEAMNRFHKYRNLKKSYDLEFQKVNDNFLNLDNDQNKIK.

The protein belongs to the complex I LYR family.

It is found in the mitochondrion. This is Electron transfer flavoprotein regulatory factor 1 homolog from Dictyostelium discoideum (Social amoeba).